We begin with the raw amino-acid sequence, 1211 residues long: Diacylglycerol kinase 1 (1211 aa).

A disordered region spans residues 174–244; sequence HHSLGGHLSH…RNSSKKSSNS (71 aa). Residues 197–230 are compositionally biased toward polar residues; it reads VTPSPLASGPSMFQASNPARRSVDSSPSHSATNH. Residues 231-244 show a composition bias toward low complexity; the sequence is SQMSRNSSKKSSNS. 2 EF-hand domains span residues 286–321 and 331–366; these read RPED…MMAV and ELRP…TIPL. 9 residues coordinate Ca(2+): Asp299, Asp301, Asn303, Glu310, Asp344, Asp346, Asp348, Thr350, and Glu355. 2 Phorbol-ester/DAG-type zinc fingers span residues 382 to 432 and 449 to 498; these read IHVW…PASC and LHHW…KKEC. The 135-residue stretch at 548–682 folds into the DAGKc domain; that stretch reads ELSCPLLVFV…LDRWSIEVTN (135 aa). 3 disordered regions span residues 789–841, 874–893, and 910–958; these read TLRT…ETEK, AATA…QRNK, and DHED…QQQQ. Positions 795-805 are enriched in low complexity; it reads SSSSSNTSSGS. Residues 826–841 show a composition bias toward basic and acidic residues; sequence DVREKSVPRRSGETEK. Over residues 879–893 the composition is skewed to polar residues; that stretch reads PVGSNQSDNSSQRNK. A compositionally biased stretch (low complexity) spans 931-958; the sequence is NSIPATPATPITPTTPNAASSVLQQQQQ.

This sequence belongs to the eukaryotic diacylglycerol kinase family. In 10-11 hours embryos, expression is abundant in a limited number of cells in the procephalic region and in the ventral nerve cord. Predominantly expressed in the adult nervous system and muscle: including compound eyes, brain cortex, fibrillar muscle, and tubular muscle.

It catalyses the reaction a 1,2-diacyl-sn-glycerol + ATP = a 1,2-diacyl-sn-glycero-3-phosphate + ADP + H(+). Upon cell stimulation converts the second messenger diacylglycerol into phosphatidate, initiating the resynthesis of phosphatidylinositols and attenuating protein kinase C activity. May have a role in the development of the embryonic nervous system and the function of the adult nervous system and muscle; regulating signal transduction in neurons. The sequence is that of Diacylglycerol kinase 1 (Dgk) from Drosophila melanogaster (Fruit fly).